Consider the following 450-residue polypeptide: Methionine aminopeptidase 2 (450 aa).

A disordered region spans residues 1–99 (MAVQAPEVDK…LFPNSQYPEG (99 aa)). Positions 33–49 (GDEDAENEESDEDDDQG) are enriched in acidic residues. Basic residues predominate over residues 60 to 75 (KKKRKRKPKKKKKKGV). Position 200 (His-200) interacts with substrate. The a divalent metal cation site is built by Asp-220, Asp-231, and His-300. His-308 lines the substrate pocket. A divalent metal cation is bound by residues Glu-336 and Glu-431.

This sequence belongs to the peptidase M24A family. Methionine aminopeptidase eukaryotic type 2 subfamily. Co(2+) is required as a cofactor. Zn(2+) serves as cofactor. It depends on Mn(2+) as a cofactor. The cofactor is Fe(2+).

It localises to the cytoplasm. The enzyme catalyses Release of N-terminal amino acids, preferentially methionine, from peptides and arylamides.. Cotranslationally removes the N-terminal methionine from nascent proteins. The N-terminal methionine is often cleaved when the second residue in the primary sequence is small and uncharged (Met-Ala-, Cys, Gly, Pro, Ser, Thr, or Val). This Uncinocarpus reesii (strain UAMH 1704) protein is Methionine aminopeptidase 2.